Consider the following 283-residue polypeptide: ATP phosphoribosyltransferase (283 aa).

This sequence belongs to the ATP phosphoribosyltransferase family. Long subfamily. As to quaternary structure, equilibrium between an active dimeric form, an inactive hexameric form and higher aggregates. Interconversion between the various forms is largely reversible and is influenced by the natural substrates and inhibitors of the enzyme. Requires Mg(2+) as cofactor.

It localises to the cytoplasm. The enzyme catalyses 1-(5-phospho-beta-D-ribosyl)-ATP + diphosphate = 5-phospho-alpha-D-ribose 1-diphosphate + ATP. It participates in amino-acid biosynthesis; L-histidine biosynthesis; L-histidine from 5-phospho-alpha-D-ribose 1-diphosphate: step 1/9. Feedback inhibited by histidine. Catalyzes the condensation of ATP and 5-phosphoribose 1-diphosphate to form N'-(5'-phosphoribosyl)-ATP (PR-ATP). Has a crucial role in the pathway because the rate of histidine biosynthesis seems to be controlled primarily by regulation of HisG enzymatic activity. The chain is ATP phosphoribosyltransferase from Mycobacterium sp. (strain JLS).